A 337-amino-acid polypeptide reads, in one-letter code: Alcohol dehydrogenase 1 (337 aa).

Cysteine 37, histidine 58, cysteine 89, cysteine 92, cysteine 95, cysteine 103, and cysteine 145 together coordinate Zn(2+).

Belongs to the zinc-containing alcohol dehydrogenase family. In terms of assembly, multimeric (with different ratios of monomers). The cofactor is Zn(2+).

The enzyme catalyses a primary alcohol + NAD(+) = an aldehyde + NADH + H(+). It catalyses the reaction a secondary alcohol + NAD(+) = a ketone + NADH + H(+). It participates in alcohol metabolism; ethanol biosynthesis via fermentation pathway. Its activity is regulated as follows. Inhibited by ethanol. This chain is Alcohol dehydrogenase 1 (adhA), found in Zymomonas mobilis subsp. mobilis (strain ATCC 31821 / ZM4 / CP4).